Here is a 392-residue protein sequence, read N- to C-terminus: Tryptophan synthase beta chain (392 aa).

K86 bears the N6-(pyridoxal phosphate)lysine mark.

It belongs to the TrpB family. In terms of assembly, tetramer of two alpha and two beta chains. It depends on pyridoxal 5'-phosphate as a cofactor.

It catalyses the reaction (1S,2R)-1-C-(indol-3-yl)glycerol 3-phosphate + L-serine = D-glyceraldehyde 3-phosphate + L-tryptophan + H2O. The protein operates within amino-acid biosynthesis; L-tryptophan biosynthesis; L-tryptophan from chorismate: step 5/5. Functionally, the beta subunit is responsible for the synthesis of L-tryptophan from indole and L-serine. This is Tryptophan synthase beta chain (trpB) from Buchnera aphidicola subsp. Schlechtendalia chinensis.